A 394-amino-acid chain; its full sequence is Elongation factor Tu (394 aa).

Residues 10–204 enclose the tr-type G domain; it reads KPHVNVGTIG…ALDTYIPEPE (195 aa). The segment at 19–26 is G1; it reads GHVDHGKT. 19-26 is a binding site for GTP; sequence GHVDHGKT. Threonine 26 serves as a coordination point for Mg(2+). A G2 region spans residues 60 to 64; sequence GITIA. Positions 81–84 are G3; it reads DCPG. GTP is bound by residues 81–85 and 136–139; these read DCPGH and NKCD. Positions 136–139 are G4; that stretch reads NKCD. The tract at residues 174-176 is G5; sequence SAL.

Belongs to the TRAFAC class translation factor GTPase superfamily. Classic translation factor GTPase family. EF-Tu/EF-1A subfamily. In terms of assembly, monomer.

Its subcellular location is the cytoplasm. The catalysed reaction is GTP + H2O = GDP + phosphate + H(+). In terms of biological role, GTP hydrolase that promotes the GTP-dependent binding of aminoacyl-tRNA to the A-site of ribosomes during protein biosynthesis. This chain is Elongation factor Tu, found in Vibrio parahaemolyticus serotype O3:K6 (strain RIMD 2210633).